Here is a 229-residue protein sequence, read N- to C-terminus: Lipoprotein-releasing system ATP-binding protein LolD (229 aa).

Residues 7 to 229 (LKCKNVTKTY…KNGKLYKKNL (223 aa)) enclose the ABC transporter domain. 43–50 (GDSGSGKS) is an ATP binding site.

Belongs to the ABC transporter superfamily. Lipoprotein translocase (TC 3.A.1.125) family. In terms of assembly, the complex is composed of two ATP-binding proteins (LolD) and two transmembrane proteins (LolC and LolE).

Its subcellular location is the cell membrane. In terms of biological role, part of the ABC transporter complex LolCDE involved in the translocation of lipoproteins, in an ATP-dependent manner. The chain is Lipoprotein-releasing system ATP-binding protein LolD from Wigglesworthia glossinidia brevipalpis.